A 788-amino-acid polypeptide reads, in one-letter code: Protein FAR1-RELATED SEQUENCE 5 (788 aa).

One can recognise an FAR1 domain in the interval 87–179; it reads AFYNSYARRI…VKDHNHELVP (93 aa). The MULE domain occupies 299–395; it reads TVTFDTTYRS…CKWHILKKCQ (97 aa). Residues 584 to 616 form an SWIM-type zinc finger; that stretch reads FNVLEMRANCSCQMFEFSGIICRHILAVFRVTN. The interval 713-733 is disordered; that stretch reads SSVTGGKHQQEVLAQPEPEDE. A coiled-coil region spans residues 731-768; that stretch reads EDEMDKKINQLRNELELANRKCEAYRTNLLSVLKEMED.

This sequence belongs to the FHY3/FAR1 family. Expressed in hypocotyls, rosette and cauline leaves, inflorescences stems, flowers and siliques.

The protein localises to the nucleus. Functionally, putative transcription activator involved in regulating light control of development. This is Protein FAR1-RELATED SEQUENCE 5 (FRS5) from Arabidopsis thaliana (Mouse-ear cress).